We begin with the raw amino-acid sequence, 428 residues long: MEEVTTCSFNSPLFRQEDDRGITYRIPALLYIPPTHTFLAFAEKRSTRRDEDALHLVLRRGLRIGQLVQWGPLKPLMEATLPGHRTMNPCPVWEQKSGCVFLFFICVRGHVTERQQIVSGRNAARLCFIYSQDAGCSWSEVRDLTEEVIGSELKHWATFAVGPGHGIQLQSGRLVIPAYTYYIPSWFFCFQLPCKTRPHSLMIYSDDLGVTWHHGRLIRPMVTVECEVAEVTGRAGHPVLYCSARTPNRCRAEALSTDHGEGFQRLALSRQLCEPPHGCQGSVVSFRPLEIPHRCQDSSSKDAPTIQQSSPGSSLRLEEEAGTPSESWLLYSHPTSRKQRVDLGIYLNQTPLEAACWSRPWILHCGPCGYSDLAALEEEGLFGCLFECGTKQECEQIAFRLFTHREILSHLQGDCTSPGRNPSQFKSN.

An FRIP motif motif is present at residues 24–27 (YRIP). Arginine 25 and arginine 45 together coordinate substrate. The active-site Proton acceptor is the aspartate 50. A BNR 1 repeat occupies 129-140 (IYSQDAGCSWSE). Residues tyrosine 179 and tyrosine 181 each contribute to the substrate site. A BNR 2 repeat occupies 203 to 214 (IYSDDLGVTWHH). Residues glutamate 225 and arginine 245 each contribute to the substrate site. A BNR 3 repeat occupies 254–265 (ALSTDHGEGFQR). A disordered region spans residues 294–318 (RCQDSSSKDAPTIQQSSPGSSLRLE). Residues 301 to 313 (KDAPTIQQSSPGS) show a composition bias toward polar residues. Serine 313 carries the post-translational modification Phosphoserine. Arginine 340 is a binding site for substrate. Tyrosine 370 serves as the catalytic Nucleophile. Glutamate 387 is an active-site residue.

It belongs to the glycosyl hydrolase 33 family. In terms of assembly, interacts with CAV1; this interaction enhances NEU3 sialidase activity within caveola. Interacts with EGFR; this interaction mediates desialylation of EGFR and enhances downstream signaling. Post-translationally, palmitoylated; may regulate intracellular trafficking and anchorage to plasma membrane and endomembranes. Highly expressed in skeletal muscle, testis, adrenal gland and thymus, followed by pancreas, liver, heart and thymus. Weakly expressed in kidney, placenta, brain and lung.

It is found in the cell membrane. The protein localises to the membrane. Its subcellular location is the caveola. It localises to the early endosome membrane. The protein resides in the recycling endosome membrane. It is found in the lysosome membrane. It carries out the reaction Hydrolysis of alpha-(2-&gt;3)-, alpha-(2-&gt;6)-, alpha-(2-&gt;8)- glycosidic linkages of terminal sialic acid residues in oligosaccharides, glycoproteins, glycolipids, colominic acid and synthetic substrates.. The enzyme catalyses a ganglioside GD1a + H2O = a ganglioside GM1 + N-acetylneuraminate. The catalysed reaction is a ganglioside GD1a (d18:1(4E)) + H2O = a ganglioside GM1 (d18:1(4E)) + N-acetylneuraminate. It catalyses the reaction a ganglioside GD1b + H2O = a ganglioside GM1 + N-acetylneuraminate. It carries out the reaction a ganglioside GD1b (d18:1(4E)) + H2O = a ganglioside GM1 (d18:1(4E)) + N-acetylneuraminate. The enzyme catalyses a ganglioside GD3 + H2O = a ganglioside GM3 + N-acetylneuraminate. The catalysed reaction is a ganglioside GD3 (d18:1(4E)) + H2O = a ganglioside GM3 (d18:1(4E)) + N-acetylneuraminate. It catalyses the reaction a ganglioside GM3 + H2O = a beta-D-galactosyl-(1-&gt;4)-beta-D-glucosyl-(1&lt;-&gt;1)-ceramide + N-acetylneuraminate. It carries out the reaction a ganglioside GM1 + H2O = a ganglioside GA1 + N-acetylneuraminate. The enzyme catalyses a ganglioside GM1 (d18:1(4E)) + H2O = a ganglioside GA1 (d18:1(4E)) + N-acetylneuraminate. The catalysed reaction is a ganglioside GM2 (d18:1(4E)) + H2O = a ganglioside GA2 (d18:1(4E)) + N-acetylneuraminate. It catalyses the reaction a ganglioside GM3 (d18:1(4E)) + H2O = a beta-D-Gal-(1-&gt;4)-beta-D-Glc-(1&lt;-&gt;1)-Cer(d18:1(4E)) + N-acetylneuraminate. It carries out the reaction a ganglioside GT1b + H2O = a ganglioside GD1b + N-acetylneuraminate. Its function is as follows. Exo-alpha-sialidase that catalyzes the hydrolytic cleavage of the terminal sialic acid (N-acetylneuraminic acid, Neu5Ac) of a glycan moiety in the catabolism of glycolipids, glycoproteins and oligosacharides. Displays high catalytic efficiency for gangliosides including alpha-(2-&gt;3)-sialylated GD1a and GM3 and alpha-(2-&gt;8)-sialylated GD3. Plays a role in the regulation of transmembrane signaling through the modulation of ganglioside content of the lipid bilayer and by direct interaction with signaling receptors, such as EGFR. Desialylates EGFR and activates downstream signaling in proliferating cells. Contributes to clathrin-mediated endocytosis by regulating sorting of endocytosed receptors to early and recycling endosomes. The polypeptide is Sialidase-3 (NEU3) (Homo sapiens (Human)).